The following is a 348-amino-acid chain: UPF0324 membrane protein BPP3732 (348 aa).

10 helical membrane passes run 20–39, 43–62, 98–120, 135–157, 164–186, 196–215, 235–257, 267–286, 299–318, and 322–344; these read GILFVALMAAAVVQLADLPF, FGFSPLVVGIVCGMLYGNFL, IAAVGLPGLAVSVGVVASTLLIG, AMLTAAGSAICGAAAVLAFEPTL, SAVAVATVVLFGTLSMFLYPVIY, QALGIYIGGTVHEVAQVVGA, VALLVPVLLVLGFWLRASAAAGA, VPWFAIGFLVLAIVNSLDIL, VFVLTMAMTALGIETRFAQI, and GPRVMALGLVLYAWLVFGGYGIV.

This sequence belongs to the UPF0324 family.

It localises to the cell membrane. This is UPF0324 membrane protein BPP3732 from Bordetella parapertussis (strain 12822 / ATCC BAA-587 / NCTC 13253).